A 200-amino-acid polypeptide reads, in one-letter code: 7-methyl-GTP pyrophosphatase (200 aa).

The active-site Proton acceptor is Asp-69.

It belongs to the Maf family. YceF subfamily. It depends on a divalent metal cation as a cofactor.

It is found in the cytoplasm. It carries out the reaction N(7)-methyl-GTP + H2O = N(7)-methyl-GMP + diphosphate + H(+). In terms of biological role, nucleoside triphosphate pyrophosphatase that hydrolyzes 7-methyl-GTP (m(7)GTP). May have a dual role in cell division arrest and in preventing the incorporation of modified nucleotides into cellular nucleic acids. The sequence is that of 7-methyl-GTP pyrophosphatase from Colwellia psychrerythraea (strain 34H / ATCC BAA-681) (Vibrio psychroerythus).